The following is a 379-amino-acid chain: Chaperone protein DnaJ (379 aa).

Residues 5-71 (DYYEILGVSR…EKRAMYDRFG (67 aa)) enclose the J domain. A CR-type zinc finger spans residues 149–231 (GTTIPIEYDR…CGGSGRIRKR (83 aa)). Cys-162, Cys-165, Cys-179, Cys-182, Cys-205, Cys-208, Cys-219, and Cys-222 together coordinate Zn(2+). 4 CXXCXGXG motif repeats span residues 162 to 169 (CSHCNGEG), 179 to 186 (CPKCHGTG), 205 to 212 (CNQCGGTG), and 219 to 226 (CHVCGGSG).

Belongs to the DnaJ family. Homodimer. It depends on Zn(2+) as a cofactor.

The protein localises to the cytoplasm. In terms of biological role, participates actively in the response to hyperosmotic and heat shock by preventing the aggregation of stress-denatured proteins and by disaggregating proteins, also in an autonomous, DnaK-independent fashion. Unfolded proteins bind initially to DnaJ; upon interaction with the DnaJ-bound protein, DnaK hydrolyzes its bound ATP, resulting in the formation of a stable complex. GrpE releases ADP from DnaK; ATP binding to DnaK triggers the release of the substrate protein, thus completing the reaction cycle. Several rounds of ATP-dependent interactions between DnaJ, DnaK and GrpE are required for fully efficient folding. Also involved, together with DnaK and GrpE, in the DNA replication of plasmids through activation of initiation proteins. This Thermosipho africanus (strain TCF52B) protein is Chaperone protein DnaJ.